Consider the following 234-residue polypeptide: Endonuclease V (234 aa).

The Mg(2+) site is built by D36 and D104.

It belongs to the endonuclease V family. Requires Mg(2+) as cofactor.

The protein localises to the cytoplasm. It carries out the reaction Endonucleolytic cleavage at apurinic or apyrimidinic sites to products with a 5'-phosphate.. In terms of biological role, DNA repair enzyme involved in the repair of deaminated bases. Selectively cleaves double-stranded DNA at the second phosphodiester bond 3' to a deoxyinosine leaving behind the intact lesion on the nicked DNA. The protein is Endonuclease V of Yersinia pestis.